The primary structure comprises 197 residues: 3-isopropylmalate dehydratase small subunit (197 aa).

This sequence belongs to the LeuD family. LeuD type 1 subfamily. As to quaternary structure, heterodimer of LeuC and LeuD.

It carries out the reaction (2R,3S)-3-isopropylmalate = (2S)-2-isopropylmalate. It participates in amino-acid biosynthesis; L-leucine biosynthesis; L-leucine from 3-methyl-2-oxobutanoate: step 2/4. Its function is as follows. Catalyzes the isomerization between 2-isopropylmalate and 3-isopropylmalate, via the formation of 2-isopropylmaleate. In Mycolicibacterium vanbaalenii (strain DSM 7251 / JCM 13017 / BCRC 16820 / KCTC 9966 / NRRL B-24157 / PYR-1) (Mycobacterium vanbaalenii), this protein is 3-isopropylmalate dehydratase small subunit.